The primary structure comprises 63 residues: Kurtoxin-like II (63 aa).

The 61-residue stretch at 2 to 62 folds into the LCN-type CS-alpha/beta domain; sequence IDGYPVDYWN…ARIKRSGRCR (61 aa). 4 cysteine pairs are disulfide-bonded: Cys-12-Cys-61, Cys-16-Cys-37, Cys-23-Cys-44, and Cys-27-Cys-46.

This sequence belongs to the long (4 C-C) scorpion toxin superfamily. Sodium channel inhibitor family. Alpha subfamily. In terms of tissue distribution, expressed by the venom gland.

The protein localises to the secreted. This neurotoxin acts on sodium and calcium channels. Potently inhibits native voltage-gated T-type calcium channel activity in mouse male germ cells. Also binds Cav3.1/CACNA1G, Cav3.2/CACNA1H, and Cav3.3/CACNA1I T-type calcium channels and inhibits the channels by modifying voltage-dependent gating. In addition, binds and significantly inhibits the inactivation of activated sodium channels (Nav1.2/SCN2A and Nav1.5/SCN5A). The chain is Kurtoxin-like II from Parabuthus granulatus (Granulated thick-tailed scorpion).